The sequence spans 159 residues: D-aminoacyl-tRNA deacylase (159 aa).

A Gly-cisPro motif, important for rejection of L-amino acids motif is present at residues 146–147 (GP).

This sequence belongs to the DTD family. As to quaternary structure, homodimer.

The protein resides in the cytoplasm. The enzyme catalyses glycyl-tRNA(Ala) + H2O = tRNA(Ala) + glycine + H(+). The catalysed reaction is a D-aminoacyl-tRNA + H2O = a tRNA + a D-alpha-amino acid + H(+). An aminoacyl-tRNA editing enzyme that deacylates mischarged D-aminoacyl-tRNAs. Also deacylates mischarged glycyl-tRNA(Ala), protecting cells against glycine mischarging by AlaRS. Acts via tRNA-based rather than protein-based catalysis; rejects L-amino acids rather than detecting D-amino acids in the active site. By recycling D-aminoacyl-tRNA to D-amino acids and free tRNA molecules, this enzyme counteracts the toxicity associated with the formation of D-aminoacyl-tRNA entities in vivo and helps enforce protein L-homochirality. This is D-aminoacyl-tRNA deacylase from Bifidobacterium adolescentis (strain ATCC 15703 / DSM 20083 / NCTC 11814 / E194a).